A 306-amino-acid polypeptide reads, in one-letter code: Low-density lipoprotein receptor class A domain-containing protein 4 (306 aa).

The Lumenal segment spans residues 1–64; that stretch reads MPEAGFQATN…PPGIFNSELE (64 aa). Residues 16 to 48 enclose the LDL-receptor class A domain; the sequence is KFTCTSGKCLYLGSLVCNQQNDCGDNSDEENCL. Cystine bridges form between cysteine 19/cysteine 38 and cysteine 32/cysteine 47. Residues 65–85 traverse the membrane as a helical segment; the sequence is FAQIIIIVVVVTVMVVVIVCL. The Cytoplasmic portion of the chain corresponds to 86 to 306; that stretch reads LNHYKVSTRS…GKDRKPGNLV (221 aa). The short motif at 180-183 is the PPxY motif 1 element; it reads PPPY. Positions 208 to 211 match the SMAD interaction motif (SIM) motif; it reads PPNR. A PPxY motif 2 motif is present at residues 252 to 255; sequence PPTY. The segment at 286-306 is disordered; it reads NNAESTIVPIKGKDRKPGNLV. Residues 296–306 are compositionally biased toward basic and acidic residues; sequence KGKDRKPGNLV.

The protein belongs to the PMEPA1 family. As to quaternary structure, interacts with PMEPA1. Interacts (via the SMAD interaction motif) with SMAD2 and SMAD3. In terms of tissue distribution, expressed in lymphocytes.

The protein localises to the early endosome membrane. Functionally, functions as a negative regulator of TGF-beta signaling and thereby probably plays a role in cell proliferation, differentiation, apoptosis, motility, extracellular matrix production and immunosuppression. In the canonical TGF-beta pathway, ZFYVE9/SARA recruits the intracellular signal transducer and transcriptional modulators SMAD2 and SMAD3 to the TGF-beta receptor. Phosphorylated by the receptor, SMAD2 and SMAD3 then form a heteromeric complex with SMAD4 that translocates to the nucleus to regulate transcription. Through interaction with SMAD2 and SMAD3, LDLRAD4 may compete with ZFYVE9 and SMAD4 and prevent propagation of the intracellular signal. The chain is Low-density lipoprotein receptor class A domain-containing protein 4 (LDLRAD4) from Homo sapiens (Human).